A 519-amino-acid chain; its full sequence is MIDLEALPHLPGCYLFKNEEGTVIYVGKAKDLKKRVSSYFQKREHDPKTASLIEAVRGFDFIVTNTEVEAFLLENTLIKKHWPRYNILLKDSKRYACIHLTEEKFPRIRLSRKKADNGSFFGPFVSAKERDYIFEVVRKTFQLRTCKKMPKRACLRYHIAACSGPCIGAISAEDYAEKVKKAASVLKGNIRELIESMEKDMRELASRQQFEQAMALRDEIAALEYLQEKQNMERQKKHNEDILNYIVRDDTVYLMLFKVYKGTLEDKQDYVFAFGENFLEEFLVQYYSENEPPEELILPEPLEESLVDFLSHVKGTKVKVTVPKQGEKKELLDLALKNVEIGFFGDRKKLEALQSKLSLPKLPNVIECFDISHLSGTSTVGSMVQFRGGRPDKHNYRRFKIESVEGIDDFASIAEVVRRRYSRLLEDKHDLPDLIIIDGGKGQLSSAFQELRKLKVRVPLISIAKREEEIYVPGIKSPLPIKKEEKASLFVQEIRDEAHRFAITYNRLLRQKSMIPKND.

One can recognise a GIY-YIG domain in the interval 9-87 (HLPGCYLFKN…IKKHWPRYNI (79 aa)). The region spanning 191–226 (RELIESMEKDMRELASRQQFEQAMALRDEIAALEYL) is the UVR domain.

It belongs to the UvrC family. In terms of assembly, interacts with UvrB in an incision complex.

It localises to the cytoplasm. Its function is as follows. The UvrABC repair system catalyzes the recognition and processing of DNA lesions. UvrC both incises the 5' and 3' sides of the lesion. The N-terminal half is responsible for the 3' incision and the C-terminal half is responsible for the 5' incision. The chain is UvrABC system protein C from Methanosarcina barkeri (strain Fusaro / DSM 804).